A 221-amino-acid polypeptide reads, in one-letter code: Probable septum site-determining protein MinC (221 aa).

It belongs to the MinC family. Interacts with MinD and FtsZ.

Its function is as follows. Cell division inhibitor that blocks the formation of polar Z ring septums. Rapidly oscillates between the poles of the cell to destabilize FtsZ filaments that have formed before they mature into polar Z rings. Prevents FtsZ polymerization. In Shewanella baltica (strain OS223), this protein is Probable septum site-determining protein MinC.